The following is a 605-amino-acid chain: Aspartate--tRNA(Asp/Asn) ligase (605 aa).

E178 contributes to the L-aspartate binding site. An aspartate region spans residues Q202–K205. L-aspartate is bound at residue R224. ATP is bound by residues R224–E226 and Q233. H458 contributes to the L-aspartate binding site. Position 488 (E488) interacts with ATP. R495 is an L-aspartate binding site. Residue G540 to R543 participates in ATP binding. The interval Q580–D605 is disordered.

This sequence belongs to the class-II aminoacyl-tRNA synthetase family. Type 1 subfamily. Homodimer.

The protein localises to the cytoplasm. It catalyses the reaction tRNA(Asx) + L-aspartate + ATP = L-aspartyl-tRNA(Asx) + AMP + diphosphate. Aspartyl-tRNA synthetase with relaxed tRNA specificity since it is able to aspartylate not only its cognate tRNA(Asp) but also tRNA(Asn). Reaction proceeds in two steps: L-aspartate is first activated by ATP to form Asp-AMP and then transferred to the acceptor end of tRNA(Asp/Asn). The polypeptide is Aspartate--tRNA(Asp/Asn) ligase (Thermosynechococcus vestitus (strain NIES-2133 / IAM M-273 / BP-1)).